A 474-amino-acid polypeptide reads, in one-letter code: MWQIRASAGCHSSPGKDKEVTLENTMNFSDIYHSDEEYFRKLKDLRAAHAEAMVKLEKMYQDKLTMKDIQAALVGDDSSSSASEKSCSHPALSATSLSEPDLDRSSSLSTTTDELPDLEKKTPGEIGTRSYAKELINNMWNDFSVEDYTQYDSDLQTAKKNRKKPKAWTPRITVPVPFEMTVREQKRREKASDAQETREKMLKRNEDDAECKKKFRANPVPSRLLLPLYEDLVKQNEERRKKTRERSKAALLASQKPFKFIAREEQKQAIREKKLRELCRAKKKPKQFKARPVPRFIYRPPANVKPKREELYGDSRTQPKARDVLQSSPWPSHSTYRAFRDPRSPAMPRGKHRHRRLSPSDQGLEKWKEPFSEQSFRNCPVLCDQCCLYESLCDSNKRQKILADIRMGEEILKETRRPNPSPRHKSPRRSAHASARPCEYSPPMPTASSRGREQAIRRSEKARMKELARIGGAR.

3 disordered regions span residues 78–126 (SSSS…PGEI), 185–210 (QKRREKASDAQETREKMLKRNEDDAE), and 308–364 (REEL…DQGL). The stretch at 188 to 250 (REKASDAQET…KKTRERSKAA (63 aa)) forms a coiled coil. Residues 274–454 (KLRELCRAKK…PTASSRGREQ (181 aa)) form a required for interaction with CFAP418 region. Residues 325–335 (LQSSPWPSHST) show a composition bias toward polar residues. Residues Lys397 and Lys413 each participate in a glycyl lysine isopeptide (Lys-Gly) (interchain with G-Cter in SUMO2) cross-link. The disordered stretch occupies residues 412–474 (LKETRRPNPS…KELARIGGAR (63 aa)). The span at 422–431 (PRHKSPRRSA) shows a compositional bias: basic residues. A compositionally biased stretch (basic and acidic residues) spans 450-468 (RGREQAIRRSEKARMKELA).

This sequence belongs to the FAM161 family. In terms of assembly, interacts (via central region) with CFAP418 (via N-terminus); the interaction is direct. Interacts (via C-terminus) with microtubules. Interacts with LCA5. Interacts with CEP290. Interacts with SDCCAG8. Interacts with FAM161B. Interacts with POC1B. Interacts with CEP78. Forms a microtubule-associated complex with POC5, CETN2 and POC1B. Interacts with CCDC15. Expressed in the retina and kidney.

The protein localises to the cytoplasm. The protein resides in the cytoskeleton. It localises to the cilium basal body. It is found in the cell projection. Its subcellular location is the cilium. The protein localises to the microtubule organizing center. The protein resides in the centrosome. It localises to the centriole. Involved in ciliogenesis. The protein is Protein FAM161A of Rattus norvegicus (Rat).